Reading from the N-terminus, the 241-residue chain is Uridylate kinase (241 aa).

An ATP-binding site is contributed by 15–18 (KLSG). The interval 23–28 (GAEGFG) is involved in allosteric activation by GTP. Gly57 is a binding site for UMP. ATP-binding residues include Gly58 and Arg62. Residues Asp77 and 138–145 (TGNPFFTT) each bind UMP. 3 residues coordinate ATP: Thr165, Phe171, and Asp174.

It belongs to the UMP kinase family. In terms of assembly, homohexamer.

The protein localises to the cytoplasm. It catalyses the reaction UMP + ATP = UDP + ADP. It functions in the pathway pyrimidine metabolism; CTP biosynthesis via de novo pathway; UDP from UMP (UMPK route): step 1/1. With respect to regulation, allosterically activated by GTP. Inhibited by UTP. Its function is as follows. Catalyzes the reversible phosphorylation of UMP to UDP. The chain is Uridylate kinase from Sodalis glossinidius (strain morsitans).